The chain runs to 271 residues: Na(+), Li(+), K(+)/H(+) antiporter subunit B (271 aa).

7 helical membrane-spanning segments follow: residues 2–22 (ILLT…AIIF), 36–56 (LPQV…FLVG), 94–114 (WVYL…PSLI), 130–150 (PFML…LGTW), 152–172 (IVMG…VIIQ), 193–213 (STIT…SIPG), and 216–236 (ALMD…ITVM). Positions 252-271 (TPHLSYSKAPPPSKGDNNAL) are disordered.

This sequence belongs to the UmpA/UmpB family. In terms of assembly, heterodimer composed of UmpA and UmpB.

It localises to the cell membrane. Its function is as follows. Part of a two-component antiporter that catalyzes the efflux of Na(+), Li(+) and K(+) in exchange for external protons. Shows a preference for Na(+), followed by K(+) and Li(+). This is Na(+), Li(+), K(+)/H(+) antiporter subunit B from Vreelandella zhaodongensis (Halomonas zhaodongensis).